A 905-amino-acid chain; its full sequence is Alanine--tRNA ligase (905 aa).

Residues His569, His573, Cys693, and His697 each coordinate Zn(2+).

Belongs to the class-II aminoacyl-tRNA synthetase family. Zn(2+) is required as a cofactor.

The protein resides in the cytoplasm. The catalysed reaction is tRNA(Ala) + L-alanine + ATP = L-alanyl-tRNA(Ala) + AMP + diphosphate. In terms of biological role, catalyzes the attachment of alanine to tRNA(Ala) in a two-step reaction: alanine is first activated by ATP to form Ala-AMP and then transferred to the acceptor end of tRNA(Ala). Also edits incorrectly charged Ser-tRNA(Ala) and Gly-tRNA(Ala) via its editing domain. The polypeptide is Alanine--tRNA ligase (Roseiflexus sp. (strain RS-1)).